The following is a 231-amino-acid chain: Small ribosomal subunit protein uS3 (231 aa).

The KH type-2 domain occupies 39-107; it reads IRKYIVENLP…DVKLNIVEIR (69 aa).

Belongs to the universal ribosomal protein uS3 family. In terms of assembly, part of the 30S ribosomal subunit. Forms a tight complex with proteins S10 and S14.

Its function is as follows. Binds the lower part of the 30S subunit head. Binds mRNA in the 70S ribosome, positioning it for translation. This chain is Small ribosomal subunit protein uS3, found in Novosphingobium aromaticivorans (strain ATCC 700278 / DSM 12444 / CCUG 56034 / CIP 105152 / NBRC 16084 / F199).